Here is an 89-residue protein sequence, read N- to C-terminus: Large ribosomal subunit protein bL27 (89 aa).

It belongs to the bacterial ribosomal protein bL27 family.

The chain is Large ribosomal subunit protein bL27 from Bacteroides fragilis (strain ATCC 25285 / DSM 2151 / CCUG 4856 / JCM 11019 / LMG 10263 / NCTC 9343 / Onslow / VPI 2553 / EN-2).